Consider the following 457-residue polypeptide: Multidrug resistance protein MdtK (457 aa).

The next 12 helical transmembrane spans lie at 11–31 (LLALAIPVVIAQLSQTAMGVV), 46–66 (AVAVGTSIWLPAILFGHGLLL), 93–113 (WLAFCVSVLIMVVIYNSDHII), 127–147 (AVGFLHAIMWGAPGYLFFQVL), 160–180 (GMVIGFIGLLVNIPINYIFIY), 188–208 (LGGVGCGVATGTVYWVMFLMM), 243–263 (LPVALALFFEVTLFAVVALLV), 278–300 (LNFSSLMFMLPMSLSVAATIRVG), 316–336 (YTSIAVGLMLACVTAIFTVVF), 350–370 (VVVMASHLMLLAALYQLSDAI), 387–407 (IFFITFTAYWLLGLPSGYLLG), and 418–438 (PSGFWIGFVIGLTSAAILMAL).

It belongs to the multi antimicrobial extrusion (MATE) (TC 2.A.66.1) family. MdtK subfamily.

The protein localises to the cell inner membrane. Functionally, multidrug efflux pump that functions probably as a Na(+)/drug antiporter. This Yersinia enterocolitica serotype O:8 / biotype 1B (strain NCTC 13174 / 8081) protein is Multidrug resistance protein MdtK.